We begin with the raw amino-acid sequence, 281 residues long: Pantothenate synthetase (281 aa).

Position 30 to 37 (30 to 37 (MGNLHAGH)) interacts with ATP. H37 acts as the Proton donor in catalysis. Position 61 (Q61) interacts with (R)-pantoate. Position 61 (Q61) interacts with beta-alanine. 149–152 (GRKD) contributes to the ATP binding site. Residue Q155 coordinates (R)-pantoate. ATP contacts are provided by residues V178 and 186-189 (MSSR).

The protein belongs to the pantothenate synthetase family. Homodimer.

It is found in the cytoplasm. It carries out the reaction (R)-pantoate + beta-alanine + ATP = (R)-pantothenate + AMP + diphosphate + H(+). The protein operates within cofactor biosynthesis; (R)-pantothenate biosynthesis; (R)-pantothenate from (R)-pantoate and beta-alanine: step 1/1. Functionally, catalyzes the condensation of pantoate with beta-alanine in an ATP-dependent reaction via a pantoyl-adenylate intermediate. The sequence is that of Pantothenate synthetase from Shewanella amazonensis (strain ATCC BAA-1098 / SB2B).